A 69-amino-acid polypeptide reads, in one-letter code: Fungal defensin oryzeasin (69 aa).

The N-terminal stretch at 1–18 is a signal peptide; the sequence is MKLLTVAFSLLLLGQVHA. The propeptide occupies 19-26; that stretch reads SPLVLDKR. Intrachain disulfides connect cysteine 29–cysteine 60, cysteine 44–cysteine 66, and cysteine 48–cysteine 68.

The protein belongs to the invertebrate defensin family.

The protein localises to the secreted. Its subcellular location is the target cell membrane. Its function is as follows. Shows antibacterial activity against numerous Gram-positive bacteria. It selectively inhibits peptidoglycan biosynthesis through complex formation with the cell wall precursor lipid II (1:1 molar ratio) thus inhibiting cell wall synthesis. The polypeptide is Fungal defensin oryzeasin (Aspergillus oryzae (strain ATCC 42149 / RIB 40) (Yellow koji mold)).